A 334-amino-acid chain; its full sequence is MNTEATHDQNEAQTTGVRLRNAREQLGLSQQAVAERLCLKVSTVRDIEEDKAPSDLASTFLRGYIRSYARLVHVPEEELLPGLEKQAPLRAAKVAPMQSFSLGKRRKKRDGWLMSFTWLVLFVVVGLTGAWWWQNHKAQQEEITTMADQSTAELNADKDSGQNVPLDTRDATSQDTTPAQTAPAPATPVDSTAATQTPAATATATQNTVVAPSQANVDTAATSAAPAATETPSALPTSQAGVAAPAADPNALVMNFTADCWLEVTDATGKKLFSGMQRKDGNLNLTGQAPYKLKIGAPAAVQIQYQGKPVDLSRFIRTNQVARLTLNAEPTPAQ.

Over 1–111 (MNTEATHDQN…LGKRRKKRDG (111 aa)) the chain is Cytoplasmic. The 53-residue stretch at 19–71 (LRNAREQLGLSQQAVAERLCLKVSTVRDIEEDKAPSDLASTFLRGYIRSYARL) folds into the HTH cro/C1-type domain. The segment at residues 30–49 (QQAVAERLCLKVSTVRDIEE) is a DNA-binding region (H-T-H motif). The chain crosses the membrane as a helical; Signal-anchor for type II membrane protein span at residues 112-132 (WLMSFTWLVLFVVVGLTGAWW). Residues 133–334 (WQNHKAQQEE…TLNAEPTPAQ (202 aa)) lie on the Periplasmic side of the membrane. 2 disordered regions span residues 155–207 (NADK…ATQN) and 221–241 (ATSA…SQAG). The span at 176–207 (TTPAQTAPAPATPVDSTAATQTPAATATATQN) shows a compositional bias: low complexity.

It belongs to the RodZ family.

The protein localises to the cell inner membrane. Functionally, cytoskeletal protein that is involved in cell-shape control through regulation of the length of the long axis. The chain is Cytoskeleton protein RodZ from Salmonella schwarzengrund (strain CVM19633).